The following is a 367-amino-acid chain: Aminomethyltransferase (367 aa).

Belongs to the GcvT family. In terms of assembly, the glycine cleavage system is composed of four proteins: P, T, L and H.

It carries out the reaction N(6)-[(R)-S(8)-aminomethyldihydrolipoyl]-L-lysyl-[protein] + (6S)-5,6,7,8-tetrahydrofolate = N(6)-[(R)-dihydrolipoyl]-L-lysyl-[protein] + (6R)-5,10-methylene-5,6,7,8-tetrahydrofolate + NH4(+). Its function is as follows. The glycine cleavage system catalyzes the degradation of glycine. In Saccharopolyspora erythraea (strain ATCC 11635 / DSM 40517 / JCM 4748 / NBRC 13426 / NCIMB 8594 / NRRL 2338), this protein is Aminomethyltransferase.